Here is a 196-residue protein sequence, read N- to C-terminus: Rac-like GTP-binding protein RAC13 (196 aa).

13 to 20 provides a ligand contact to GTP; the sequence is GDGAVGKT. Residues 35–43 carry the Effector region motif; it reads YVPTVFDNF. Residues 60-64 and 118-121 each bind GTP; these read DTAGQ and TKLD. Position 193 is a cysteine methyl ester (Cys-193). Cys-193 carries the S-geranylgeranyl cysteine lipid modification. The propeptide at 194 to 196 is removed in mature form; it reads AFL.

This sequence belongs to the small GTPase superfamily. Rho family.

The protein resides in the cytoplasm. It localises to the membrane. In terms of biological role, could participate in a signal transduction pathway that controls cytoskeletal organization. Inactive GDP-bound Rho GTPases reside in the cytosol, are found in a complex with Rho GDP-dissociation inhibitors (Rho GDIs), and are released from the GDI protein in order to translocate to membranes upon activation. This is Rac-like GTP-binding protein RAC13 (RAC13) from Gossypium hirsutum (Upland cotton).